Consider the following 156-residue polypeptide: 6,7-dimethyl-8-ribityllumazine synthase (156 aa).

5-amino-6-(D-ribitylamino)uracil is bound by residues Phe-23, 57-59 (SFE), and 81-83 (AVI). 86–87 (GT) contributes to the (2S)-2-hydroxy-3-oxobutyl phosphate binding site. The active-site Proton donor is His-89. Residue Phe-114 coordinates 5-amino-6-(D-ribitylamino)uracil. Residue Arg-128 participates in (2S)-2-hydroxy-3-oxobutyl phosphate binding.

It belongs to the DMRL synthase family. In terms of assembly, forms an icosahedral capsid composed of 60 subunits, arranged as a dodecamer of pentamers.

It catalyses the reaction (2S)-2-hydroxy-3-oxobutyl phosphate + 5-amino-6-(D-ribitylamino)uracil = 6,7-dimethyl-8-(1-D-ribityl)lumazine + phosphate + 2 H2O + H(+). The protein operates within cofactor biosynthesis; riboflavin biosynthesis; riboflavin from 2-hydroxy-3-oxobutyl phosphate and 5-amino-6-(D-ribitylamino)uracil: step 1/2. Its function is as follows. Catalyzes the formation of 6,7-dimethyl-8-ribityllumazine by condensation of 5-amino-6-(D-ribitylamino)uracil with 3,4-dihydroxy-2-butanone 4-phosphate. This is the penultimate step in the biosynthesis of riboflavin. This is 6,7-dimethyl-8-ribityllumazine synthase from Alkalilimnicola ehrlichii (strain ATCC BAA-1101 / DSM 17681 / MLHE-1).